A 320-amino-acid chain; its full sequence is Cytochrome f (320 aa).

Residues Met-1–Ala-35 form the signal peptide. Positions 36, 56, 59, and 60 each coordinate heme. The chain crosses the membrane as a helical span at residues Val-286–Lys-306.

This sequence belongs to the cytochrome f family. The 4 large subunits of the cytochrome b6-f complex are cytochrome b6, subunit IV (17 kDa polypeptide, petD), cytochrome f and the Rieske protein, while the 4 small subunits are PetG, PetL, PetM and PetN. The complex functions as a dimer. Heme serves as cofactor.

It localises to the plastid. The protein resides in the chloroplast thylakoid membrane. Component of the cytochrome b6-f complex, which mediates electron transfer between photosystem II (PSII) and photosystem I (PSI), cyclic electron flow around PSI, and state transitions. The protein is Cytochrome f of Helianthus annuus (Common sunflower).